Reading from the N-terminus, the 267-residue chain is Palmitoyltransferase ZDHHC12 (267 aa).

Topologically, residues 1–9 are cytoplasmic; sequence MALWPPLNS. The helical transmembrane segment at 10-30 threads the bilayer; sequence GMLVRTGHTVLTWGITLVLFL. Residues 31-43 are Lumenal-facing; it reads HDTELRQWEEQGE. A helical transmembrane segment spans residues 44 to 64; it reads LLLPLTFLLLVLSSLLLYLAV. At 65–140 the chain is on the cytoplasmic side; it reads SLMDPGYVTT…ENCVGERNHP (76 aa). The DHHC domain maps to 97 to 147; sequence RRCRHCLVLQPLRARHCRDCRRCVRRYDHHCPWMENCVGERNHPLFVAYLA. Cysteine 127 serves as the catalytic S-palmitoyl cysteine intermediate. Residues 141–161 form a helical membrane-spanning segment; the sequence is LFVAYLALQLVVLLWGLCLAW. At 162-178 the chain is on the lumenal side; sequence SGLQFFQPWGLWLRSTG. The helical transmembrane segment at 179–199 threads the bilayer; sequence LLFTTFLLLSFFALVVALLLA. The Cytoplasmic portion of the chain corresponds to 200–267; that stretch reads SHLYLVARNT…EEEEGSSQVV (68 aa).

The protein belongs to the DHHC palmitoyltransferase family.

Its subcellular location is the golgi apparatus membrane. The protein resides in the endoplasmic reticulum membrane. It catalyses the reaction L-cysteinyl-[protein] + hexadecanoyl-CoA = S-hexadecanoyl-L-cysteinyl-[protein] + CoA. Palmitoyltransferase that catalyzes the addition of palmitate onto various protein substrates. Has a palmitoyltransferase activity toward gephyrin/GPHN, regulating its clustering at synapses and its function in gamma-aminobutyric acid receptor clustering. Thereby, indirectly regulates GABAergic synaptic transmission. Negatively regulates NLRP3-driven inflammation. Catalyzes NLRP3 palmitoylation, leading to its degradation via the chaperone-mediated autophagy (CMA) process. In Mus musculus (Mouse), this protein is Palmitoyltransferase ZDHHC12.